The chain runs to 347 residues: Heat-inducible transcription repressor HrcA (347 aa).

It belongs to the HrcA family.

In terms of biological role, negative regulator of class I heat shock genes (grpE-dnaK-dnaJ and groELS operons). Prevents heat-shock induction of these operons. In Laribacter hongkongensis (strain HLHK9), this protein is Heat-inducible transcription repressor HrcA.